A 1134-amino-acid polypeptide reads, in one-letter code: Envelopment polyprotein (1134 aa).

The first 16 residues, 1–16 (MWSLLLLAALVGQGFA), serve as a signal peptide directing secretion. Residues 17-484 (LKNVFDMRIQ…PGFHGWATAA (468 aa)) lie on the Lumenal side of the membrane. Intrachain disulfides connect C27-C149, C61-C155, C107-C126, C131-C136, C173-C183, C208-C245, C232-C349, C374-C433, C378-C387, and C403-C422. A glycan (N-linked (GlcNAc...) asparagine; by host) is linked at N132. 2 N-linked (GlcNAc...) asparagine; by host glycosylation sites follow: N233 and N345. N397 is a glycosylation site (N-linked (GlcNAc...) asparagine; by host). A helical transmembrane segment spans residues 485-504 (LLITFCFGWVLIPACTLAIL). Residues 505-626 (LVLKFFANIL…NLFRYKSRCY (122 aa)) lie on the Cytoplasmic side of the membrane. The segment at 514 to 531 (LHTSNQENRFKAILRKIK) is binding to the ribonucleoprotein. 2 consecutive CCHC-type zinc fingers follow at residues 543–563 (CEIC…NLSC) and 568–589 (CPYC…YKVC). 3 binding to the ribonucleoprotein regions span residues 586–603 (YKVC…KKTV), 590–601 (QATHRFREDLKK), and 609–623 (WARL…RYKS). The region spanning 609–632 (WARLYRTLNLFRYKSRCYILTMWT) is the ITAM domain. The YxxL signature appears at 613–616 (YRTL). Residues 627–647 (ILTMWTLLLIIESILWAASAA) traverse the membrane as a helical segment. Over 648–1105 (EIPLVPLWTD…WVMGIINGNW (458 aa)) the chain is Lumenal. 8 disulfides stabilise this stretch: C734–C769, C738–C776, C750–C884, C764–C895, C779–C903, C805–C814, C822–C831, and C862–C866. The interval 756 to 776 (YEYENSWACNPPDCPGVGTGC) is fusion loop. The N-linked (GlcNAc...) asparagine; by host glycan is linked to N927. 5 disulfide bridges follow: C969–C999, C992–C1044, C1009–C1014, C1045–C1050, and C1084–C1088. A helical membrane pass occupies residues 1106–1125 (VVLIVLCVLLLFSLILLSIL). Residues 1121–1134 (LLSILCPVRKHKKS) are binding to the ribonucleoprotein. Topologically, residues 1126 to 1134 (CPVRKHKKS) are cytoplasmic.

This sequence belongs to the hantavirus envelope glycoprotein family. As to quaternary structure, homodimer. Homotetramer; forms heterotetrameric Gn-Gc spikes in the pre-fusion conformation. Interacts (via C-terminus) with the nucleoprotein. Interacts with host TUFM; this interaction contributes to the virus-induced degradation of mitochondria by autophagy, which leads to degradation of host MAVS and inhibition of type I interferon (IFN) responses. Interacts with host MAP1LC3B; this interaction contributes to the virus-induced degradation of mitochondria by autophagy, which leads to degradation of host MAVS and inhibition of type I interferon (IFN) responses. In terms of assembly, homodimer. Homotetramer; forms heterotetrameric Gn-Gc spikes in the pre-fusion conformation. Homotrimer; forms homotrimer in the post-fusion conformation at acidic pH. Interacts (via C-terminus) with the nucleoprotein. Envelope polyprotein precursor is quickly cleaved in vivo just after synthesis, presumably by host signal peptidase.

The protein localises to the virion membrane. It is found in the host cell surface. Its subcellular location is the host Golgi apparatus membrane. It localises to the host endoplasmic reticulum membrane. The protein resides in the host mitochondrion. Its function is as follows. Forms homotetramers with glycoprotein C at the surface of the virion. Attaches the virion to host cell receptors including integrin ITGAV/ITGB3. This attachment induces virion internalization predominantly through clathrin-dependent endocytosis. Mediates the assembly and budding of infectious virus particles through its interaction with the nucleocapsid protein and the viral genome. May dysregulate normal immune and endothelial cell responses through an ITAM motif. Translocates to mitochondria, binds to host TUFM and recruits MAP1LC3B. These interactions induce mitochondrial autophagy and therefore destruction of host MAVS leading to inhibition of type I interferon (IFN) responses. Concomitant breakdown of glycoprotein N is apparently prevented by the nucleoprotein that may inhibit Gn-stimulated autophagosome-lysosome fusion. Interacts with the viral genomic RNA. In terms of biological role, forms homotetramers with glycoprotein N at the surface of the virion. Attaches the virion to host cell receptors including integrin ITGAV/ITGB3. This attachment induces virion internalization predominantly through clathrin-dependent endocytosis. Class II fusion protein that promotes fusion of viral membrane with host endosomal membrane after endocytosis of the virion. In Homo sapiens (Human), this protein is Envelopment polyprotein (GP).